An 80-amino-acid chain; its full sequence is Sulfur carrier protein TusA (80 aa).

Catalysis depends on Cys17, which acts as the Cysteine persulfide intermediate.

It belongs to the sulfur carrier protein TusA family.

It is found in the cytoplasm. Its function is as follows. Sulfur carrier protein which probably makes part of a sulfur-relay system. The protein is Sulfur carrier protein TusA of Pseudomonas putida (strain W619).